The sequence spans 270 residues: Regulatory protein RecX (270 aa).

The protein belongs to the RecX family.

The protein resides in the cytoplasm. Modulates RecA activity. The sequence is that of Regulatory protein RecX from Bacillus anthracis (strain A0248).